The following is a 239-amino-acid chain: MNIDIVISADHIDEKRLIKKTVIIIDILRATSVITTAINNGCKKVIPVLTVEEAKDIAKNSKEDIILGGERNALKIDGFNFSNSPLEYTKKYVEGKTVVLSTTNGTRAINNSFNAKTILISALINSKATAKAIDKLNEDLIIINSGTNGQFSIDDFICSGYLIDCLYNIRKDLELSDIAKTAHYIYTNNKDIESFVKKATHYSRLKSLNLEKDLEYCFQKDIIGVVPQYKDGYIIKSNI.

This sequence belongs to the ComB family. Mg(2+) serves as cofactor.

It carries out the reaction (2R)-O-phospho-3-sulfolactate + H2O = (2R)-3-sulfolactate + phosphate. This Clostridium botulinum (strain Loch Maree / Type A3) protein is Probable 2-phosphosulfolactate phosphatase.